Consider the following 101-residue polypeptide: Small ribosomal subunit protein bS18c (101 aa).

Over residues 1-19 (MDKSKQPFHKTKRSFRRRL) the composition is skewed to basic residues. The segment at 1-23 (MDKSKQPFHKTKRSFRRRLPPIG) is disordered.

This sequence belongs to the bacterial ribosomal protein bS18 family. As to quaternary structure, part of the 30S ribosomal subunit.

The protein localises to the plastid. Its subcellular location is the chloroplast. The chain is Small ribosomal subunit protein bS18c from Lemna minor (Common duckweed).